A 40-amino-acid polypeptide reads, in one-letter code: Beta/delta-ctenitoxin-Pr1a (40 aa).

Intrachain disulfides connect C1/C15, C8/C21, C14/C31, and C23/C29.

It belongs to the neurotoxin 03 (Tx2) family. 05 subfamily. Expressed by the venom gland.

The protein resides in the secreted. Potent insecticidal toxin that binds to two distinct sites in insect sodium channels, with close affinity (Kd1=34.7 pM and Kd2=35.1 pM). Its association is rather fast (1.4 and 8.5 minutes, respectively for sites 1 and 2) and its dissociation is a slower process (5.4 and 32.8 minutes, respectively). On rat brain synaptosomes the toxin partially competes (~30%) with the beta-toxin CssIV, but does not compete with the alpha-toxin AaII, nor with the beta-toxin Ts VII. On cockroach nerve cord synaptosomes, the toxin does not compete with the anti-insect toxin LqqIT1, but it competes with the 'alpha-like' toxin BomIV (IC(50)=80 pM). In cockroach neurons, the toxin inhibits the inactivation of sodium channels and it shifts the sodium channel activation to hyperpolarizing potentials. Hence, it behaves like an 'alpha-like' toxin and binds preferentially to site 3 on the insect Nav channel, located on the domain IV. The toxin may also inhibit the N-methyl-D-aspartate (NMDA)-subtype of ionotropic glutamate receptor (GRIN). In vivo, the toxin causes excitatory effects on insects. The chain is Beta/delta-ctenitoxin-Pr1a from Phoneutria reidyi (Brazilian Amazonian armed spider).